A 129-amino-acid chain; its full sequence is Small ribosomal subunit protein bS6 (129 aa).

Residues 110 to 121 are compositionally biased toward basic and acidic residues; it reads FVRRDDERREDT. The disordered stretch occupies residues 110–129; that stretch reads FVRRDDERREDTVEAASSEE.

Belongs to the bacterial ribosomal protein bS6 family.

Its function is as follows. Binds together with bS18 to 16S ribosomal RNA. The protein is Small ribosomal subunit protein bS6 of Aeromonas salmonicida (strain A449).